The following is a 140-amino-acid chain: Ribosome maturation factor RimP (140 aa).

The protein belongs to the RimP family.

Its subcellular location is the cytoplasm. In terms of biological role, required for maturation of 30S ribosomal subunits. The protein is Ribosome maturation factor RimP of Campylobacter lari (strain RM2100 / D67 / ATCC BAA-1060).